Reading from the N-terminus, the 308-residue chain is Probable manganese-dependent inorganic pyrophosphatase (308 aa).

Residues H9, D13, D15, D75, H97, and D149 each contribute to the Mn(2+) site.

The protein belongs to the PPase class C family. Requires Mn(2+) as cofactor.

It localises to the cytoplasm. It catalyses the reaction diphosphate + H2O = 2 phosphate + H(+). This chain is Probable manganese-dependent inorganic pyrophosphatase, found in Bacillus pumilus (strain SAFR-032).